A 1085-amino-acid chain; its full sequence is Carbamoyl phosphate synthase large chain (1085 aa).

The interval 1–399 is carboxyphosphate synthetic domain; it reads MPKRTDISNI…ALQKALCSLE (399 aa). ATP-binding residues include arginine 127, arginine 167, glycine 174, glutamate 206, leucine 208, glutamate 213, glycine 239, valine 240, histidine 241, glutamine 283, and glutamate 297. The ATP-grasp 1 domain occupies 131–326; it reads KEAMLKIGMD…IAKVATMLAV (196 aa). 3 residues coordinate Mg(2+): glutamine 283, glutamate 297, and asparagine 299. The Mn(2+) site is built by glutamine 283, glutamate 297, and asparagine 299. Residues 400 to 551 form an oligomerization domain region; sequence NNWLGFESLS…YAPNPLPPIG (152 aa). The carbamoyl phosphate synthetic domain stretch occupies residues 552 to 951; it reads NKQEKQEKKI…AFFKAQTACF (400 aa). An ATP-grasp 2 domain is found at 678–871; it reads SLFLKELDIK…LAKVATRVMV (194 aa). 10 residues coordinate ATP: arginine 714, lysine 756, leucine 758, glutamate 763, glycine 788, isoleucine 789, histidine 790, serine 791, glutamine 830, and glutamate 842. Mg(2+)-binding residues include glutamine 830, glutamate 842, and asparagine 844. Glutamine 830, glutamate 842, and asparagine 844 together coordinate Mn(2+). Positions 952–1085 constitute an MGS-like domain; sequence NPIKNKGLIF…ELLALQDYLK (134 aa). The allosteric domain stretch occupies residues 952 to 1085; the sequence is NPIKNKGLIF…ELLALQDYLK (134 aa).

It belongs to the CarB family. Composed of two chains; the small (or glutamine) chain promotes the hydrolysis of glutamine to ammonia, which is used by the large (or ammonia) chain to synthesize carbamoyl phosphate. Tetramer of heterodimers (alpha,beta)4. The cofactor is Mg(2+). Mn(2+) is required as a cofactor.

The enzyme catalyses hydrogencarbonate + L-glutamine + 2 ATP + H2O = carbamoyl phosphate + L-glutamate + 2 ADP + phosphate + 2 H(+). It catalyses the reaction hydrogencarbonate + NH4(+) + 2 ATP = carbamoyl phosphate + 2 ADP + phosphate + 2 H(+). The protein operates within amino-acid biosynthesis; L-arginine biosynthesis; carbamoyl phosphate from bicarbonate: step 1/1. It functions in the pathway pyrimidine metabolism; UMP biosynthesis via de novo pathway; (S)-dihydroorotate from bicarbonate: step 1/3. Functionally, large subunit of the glutamine-dependent carbamoyl phosphate synthetase (CPSase). CPSase catalyzes the formation of carbamoyl phosphate from the ammonia moiety of glutamine, carbonate, and phosphate donated by ATP, constituting the first step of 2 biosynthetic pathways, one leading to arginine and/or urea and the other to pyrimidine nucleotides. The large subunit (synthetase) binds the substrates ammonia (free or transferred from glutamine from the small subunit), hydrogencarbonate and ATP and carries out an ATP-coupled ligase reaction, activating hydrogencarbonate by forming carboxy phosphate which reacts with ammonia to form carbamoyl phosphate. This is Carbamoyl phosphate synthase large chain from Helicobacter pylori (strain J99 / ATCC 700824) (Campylobacter pylori J99).